A 460-amino-acid chain; its full sequence is Probable lipid II flippase MurJ (460 aa).

Transmembrane regions (helical) follow at residues 4 to 24, 50 to 70, 95 to 115, 122 to 142, 155 to 175, 228 to 248, 257 to 277, 292 to 312, 336 to 356, 366 to 386, and 428 to 448; these read ILGA…PNLF, FASL…LLVA, IVAI…LGAL, FFAS…ALLI, LSYG…YPLV, IASF…VSYL, LPLA…IAIA, KAWF…IMLS, VFSL…FSLW, AAKI…SLMP, and LVIL…KSWV.

This sequence belongs to the MurJ/MviN family.

It localises to the cell inner membrane. Its pathway is cell wall biogenesis; peptidoglycan biosynthesis. Involved in peptidoglycan biosynthesis. Transports lipid-linked peptidoglycan precursors from the inner to the outer leaflet of the cytoplasmic membrane. In Helicobacter pylori (strain J99 / ATCC 700824) (Campylobacter pylori J99), this protein is Probable lipid II flippase MurJ.